The sequence spans 218 residues: Large ribosomal subunit protein bL25 (218 aa).

2 disordered regions span residues 1–20 (MKTHELKASPRTTRGNGPAR) and 185–218 (PTAAALPEEGEEGEEGEEGGEGGEAEGAEAASEE). The span at 192 to 218 (EEGEEGEEGEEGGEGGEAEGAEAASEE) shows a compositional bias: acidic residues.

This sequence belongs to the bacterial ribosomal protein bL25 family. CTC subfamily. Part of the 50S ribosomal subunit; part of the 5S rRNA/L5/L18/L25 subcomplex. Contacts the 5S rRNA. Binds to the 5S rRNA independently of L5 and L18.

In terms of biological role, this is one of the proteins that binds to the 5S RNA in the ribosome where it forms part of the central protuberance. The chain is Large ribosomal subunit protein bL25 from Desulfatibacillum aliphaticivorans.